The chain runs to 236 residues: Small ribosomal subunit protein uS2c (236 aa).

This sequence belongs to the universal ribosomal protein uS2 family.

It is found in the plastid. The protein localises to the chloroplast. The protein is Small ribosomal subunit protein uS2c (rps2) of Acorus calamus var. americanus (American sweet flag).